Here is a 417-residue protein sequence, read N- to C-terminus: Dihydrolipoyllysine-residue succinyltransferase component of 2-oxoglutarate dehydrogenase complex (417 aa).

Residues 1–76 (MAEIKVPELA…QVGEIIGTIS (76 aa)) form the Lipoyl-binding domain. Lysine 42 bears the N6-lipoyllysine mark. Residues 75–191 (ISEGAGESSA…SFDKPVEVQK (117 aa)) form a disordered region. 2 stretches are compositionally biased toward basic and acidic residues: residues 89-103 (EKTE…EKQA) and 152-163 (RKQDVEAYEKPA). Residues 123–160 (IASPSARKLAREKGIDLSQVPTGDPLGRVRKQDVEAYE) form the Peripheral subunit-binding (PSBD) domain. Residues 164-182 (SKPAPQQKQQPQAQKAQQS) show a composition bias toward low complexity. Active-site residues include histidine 388 and aspartate 392.

It belongs to the 2-oxoacid dehydrogenase family. Forms a 24-polypeptide structural core with octahedral symmetry. Part of the 2-oxoglutarate dehydrogenase (OGDH) complex composed of E1 (2-oxoglutarate dehydrogenase), E2 (dihydrolipoamide succinyltransferase) and E3 (dihydrolipoamide dehydrogenase); the complex contains multiple copies of the three enzymatic components (E1, E2 and E3). (R)-lipoate serves as cofactor.

It catalyses the reaction N(6)-[(R)-dihydrolipoyl]-L-lysyl-[protein] + succinyl-CoA = N(6)-[(R)-S(8)-succinyldihydrolipoyl]-L-lysyl-[protein] + CoA. The protein operates within amino-acid degradation; L-lysine degradation via saccharopine pathway; glutaryl-CoA from L-lysine: step 6/6. Functionally, E2 component of the 2-oxoglutarate dehydrogenase (OGDH) complex which catalyzes the second step in the conversion of 2-oxoglutarate to succinyl-CoA and CO(2). The polypeptide is Dihydrolipoyllysine-residue succinyltransferase component of 2-oxoglutarate dehydrogenase complex (odhB) (Bacillus subtilis (strain 168)).